We begin with the raw amino-acid sequence, 664 residues long: Metal-nicotianamine transporter YSL2 (664 aa).

Helical transmembrane passes span 31–51 (ITVR…VICL), 55–75 (LTTG…FVFL), 103–123 (CAVA…LLGL), 147–167 (GVGW…VVLV), 209–229 (GFIK…FYSG), 268–288 (LVNL…WPLI), 314–334 (FICI…ILFF), 378–398 (IPLW…IIAI), 409–429 (FVLV…YGAG), 457–477 (VVAG…SADL), 496–516 (VAQA…FFLF), 549–569 (SALP…AVAA), 594–614 (FLVG…VYVW), and 629–649 (VASG…LLAL).

This sequence belongs to the YSL (TC 2.A.67.2) family. As to expression, expressed in roots, leaves and weakly in shoots. Restricted to the veins, to the central cylinder of the young roots and to the pericycle and the endodermis cells facing the meta-xylem tubes in older roots. Expressed in the vasculature of sepals, petals, anthers, stigma and siliques, but not in developing seeds or in meristematic zones.

It localises to the cell membrane. In terms of biological role, may be involved in the lateral transport of nicotianamine-chelated metals in the vasculature. The polypeptide is Metal-nicotianamine transporter YSL2 (YSL2) (Arabidopsis thaliana (Mouse-ear cress)).